Consider the following 295-residue polypeptide: F-box only protein 6 (295 aa).

One can recognise an F-box domain in the interval 1–48; that stretch reads MVHINELPENILLELFIHIPAPQLLRNCRLVCRLWRDLIDVVSLWKRK. The FBA domain maps to 69–250; sequence FYILCSLQRN…VTNSSIIISH (182 aa). 2 positions are modified to phosphoserine: Ser-249 and Ser-276. Thr-280 bears the Phosphothreonine mark.

Interacts with CHEK1 and CUL1. Part of a SCF (SKP1-cullin-F-box) protein ligase complex. Interacts with VCP. As to expression, present in liver and kidney (at protein level). Widely expressed.

It is found in the cytoplasm. The protein operates within protein modification; protein ubiquitination. Substrate-recognition component of some SCF (SKP1-CUL1-F-box protein)-type E3 ubiquitin ligase complexes. Involved in DNA damage response by specifically recognizing activated CHEK1 (phosphorylated on 'Ser-345'), promoting its ubiquitination and degradation. Ubiquitination of CHEK1 is required to ensure that activated CHEK1 does not accumulate as cells progress through S phase, or when replication forks encounter transient impediments during normal DNA replication. Involved in endoplasmic reticulum-associated degradation pathway (ERAD) for misfolded lumenal proteins by recognizing and binding sugar chains on unfolded glycoproteins that are retrotranslocated into the cytosol and promoting their ubiquitination and subsequent degradation. Able to recognize and bind denatured glycoproteins, which are modified with not only high-mannose but also complex-type oligosaccharides. Also recognizes sulfated glycans. This is F-box only protein 6 (Fbxo6) from Mus musculus (Mouse).